The following is a 190-amino-acid chain: Protein OPG209 (190 aa).

The protein belongs to the orthopoxvirus OPG209 protein family.

The protein is Protein OPG209 (OPG209) of Bos taurus (Bovine).